Reading from the N-terminus, the 473-residue chain is Cysteine--tRNA ligase (473 aa).

Cysteine 28 is a Zn(2+) binding site. A 'HIGH' region motif is present at residues 30 to 40 (PTVYNMPHIGN). Positions 213, 238, and 242 each coordinate Zn(2+). Residues 270 to 274 (KMSKS) carry the 'KMSKS' region motif. Lysine 273 contacts ATP.

This sequence belongs to the class-I aminoacyl-tRNA synthetase family. It depends on Zn(2+) as a cofactor.

The protein localises to the cytoplasm. The catalysed reaction is tRNA(Cys) + L-cysteine + ATP = L-cysteinyl-tRNA(Cys) + AMP + diphosphate. The chain is Cysteine--tRNA ligase from Methanosarcina acetivorans (strain ATCC 35395 / DSM 2834 / JCM 12185 / C2A).